Here is a 785-residue protein sequence, read N- to C-terminus: Phosphoinositide phosphatase SAC5 (785 aa).

The SAC domain occupies 158–533 (LSVVDLSKNF…GNTLAMQYGG (376 aa)). The Phosphatase catalytic core signature appears at 469-480 (RTNCIDCLDRTN). Polar residues predominate over residues 688–700 (GSGQMFQGSSSNS). Positions 688–707 (GSGQMFQGSSSNSDSHRPND) are disordered.

In terms of assembly, component of the PI(3,5)P2 regulatory complex at least composed of ATG18, SAC/FIG4, FAB1 and VAC14. Mg(2+) is required as a cofactor. In terms of tissue distribution, ubiquitous with a higher level of expression in young seedlings than in other tissues.

It localises to the vacuole membrane. The enzyme catalyses a 1,2-diacyl-sn-glycero-3-phospho-(1D-myo-inositol-3,5-bisphosphate) + H2O = a 1,2-diacyl-sn-glycero-3-phospho-(1D-myo-inositol-3-phosphate) + phosphate. The PI(3,5)P2 regulatory complex regulates both the synthesis and turnover of phosphatidylinositol 3,5-bisphosphate (PtdIns(3,5)P2). The sequence is that of Phosphoinositide phosphatase SAC5 (SAC5) from Arabidopsis thaliana (Mouse-ear cress).